The sequence spans 407 residues: Peptidase T (407 aa).

Residue His78 participates in Zn(2+) binding. Asp80 is an active-site residue. Zn(2+) is bound at residue Asp139. Glu173 functions as the Proton acceptor in the catalytic mechanism. Zn(2+) is bound by residues Glu174, Asp196, and His378.

This sequence belongs to the peptidase M20B family. Requires Zn(2+) as cofactor.

It localises to the cytoplasm. It carries out the reaction Release of the N-terminal residue from a tripeptide.. Its function is as follows. Cleaves the N-terminal amino acid of tripeptides. This chain is Peptidase T, found in Shewanella pealeana (strain ATCC 700345 / ANG-SQ1).